Consider the following 354-residue polypeptide: Probable butyrate kinase 2 (354 aa).

Belongs to the acetokinase family.

The protein resides in the cytoplasm. It carries out the reaction butanoate + ATP = butanoyl phosphate + ADP. The polypeptide is Probable butyrate kinase 2 (Caldanaerobacter subterraneus subsp. tengcongensis (strain DSM 15242 / JCM 11007 / NBRC 100824 / MB4) (Thermoanaerobacter tengcongensis)).